The primary structure comprises 350 residues: Atypical chemokine receptor 4 (350 aa).

Over 1–41 the chain is Extracellular; that stretch reads MAVEYNQSTDYYYEENEMNDTHDYSQYEVICIKEEVRKFAK. Asparagine 6 and asparagine 19 each carry an N-linked (GlcNAc...) asparagine glycan. A helical transmembrane segment spans residues 42–66; that stretch reads VFLPAFFTIAFIIGLAGNSTVVAIY. Residues 67–79 lie on the Cytoplasmic side of the membrane; the sequence is AYYKKRRTKTDVY. A helical membrane pass occupies residues 80–99; it reads ILNLAVADLFLLFTLPFWAV. Residues 100-113 are Extracellular-facing; sequence NAVHGWVLGKIMCK. Cysteine 112 and cysteine 184 form a disulfide bridge. A helical transmembrane segment spans residues 114 to 135; sequence VTSALYTVNFVSGMQFLACIST. Over 136–153 the chain is Cytoplasmic; that stretch reads DRYWAVTKAPSQSGVGKP. Residues 154-175 traverse the membrane as a helical segment; that stretch reads CWVICFCVWVAAILLSIPQLVF. Residues 176–199 lie on the Extracellular side of the membrane; sequence YTVNHKARCVPIFPYHLGTSMKAS. Residues 200 to 222 traverse the membrane as a helical segment; sequence IQILEICIGFIIPFLIMAVCYFI. The Cytoplasmic segment spans residues 223–241; it reads TAKTLIKMPNIKKSQPLKV. Residues 242–265 form a helical membrane-spanning segment; it reads LFTVVIVFIVTQLPYNIVKFCQAI. Residues 266 to 283 are Extracellular-facing; it reads DIIYSLITDCDMSKRMDV. The chain crosses the membrane as a helical span at residues 284–306; that stretch reads AIQITESIALFHSCLNPVLYVFM. Residues 307–350 are Cytoplasmic-facing; sequence GTSFKNYIMKVAKKYGSWRRQRQNVEEIPFESEDATEPTSTFSI.

The protein belongs to the G-protein coupled receptor 1 family. Atypical chemokine receptor subfamily. Forms heteromers with CXCR3. Interacts with ARRB1 and ARRB2. The Ser/Thr residues in the C-terminal cytoplasmic tail may be phosphorylated. In terms of tissue distribution, expressed in circumvallate and fungiform papillae, olfactory epithelium and lung. Lower expression in liver, kidney and tongue epithelium bearing no taste papillae. Very low expression in the cerebral cortex of the brain.

It is found in the early endosome. The protein localises to the recycling endosome. The protein resides in the cell membrane. Atypical chemokine receptor that controls chemokine levels and localization via high-affinity chemokine binding that is uncoupled from classic ligand-driven signal transduction cascades, resulting instead in chemokine sequestration, degradation, or transcytosis. Also known as interceptor (internalizing receptor) or chemokine-scavenging receptor or chemokine decoy receptor. Acts as a receptor for chemokines CCL2, CCL8, CCL13, CCL19, CCL21 and CCL25. Chemokine-binding does not activate G-protein-mediated signal transduction but instead induces beta-arrestin recruitment, leading to ligand internalization. Plays an important role in controlling the migration of immune and cancer cells that express chemokine receptors CCR7 and CCR9, by reducing the availability of CCL19, CCL21, and CCL25 through internalization. Negatively regulates CXCR3-induced chemotaxis. Regulates T-cell development in the thymus. The sequence is that of Atypical chemokine receptor 4 (ACKR4) from Bos taurus (Bovine).